The following is a 486-amino-acid chain: Ribosomal RNA small subunit methyltransferase F (486 aa).

Residues 124 to 130 (ASAPGSK), glutamate 148, aspartate 175, and aspartate 193 contribute to the S-adenosyl-L-methionine site. Cysteine 246 serves as the catalytic Nucleophile.

It belongs to the class I-like SAM-binding methyltransferase superfamily. RsmB/NOP family.

The protein resides in the cytoplasm. It catalyses the reaction cytidine(1407) in 16S rRNA + S-adenosyl-L-methionine = 5-methylcytidine(1407) in 16S rRNA + S-adenosyl-L-homocysteine + H(+). In terms of biological role, specifically methylates the cytosine at position 1407 (m5C1407) of 16S rRNA. The polypeptide is Ribosomal RNA small subunit methyltransferase F (Shewanella baltica (strain OS195)).